Consider the following 613-residue polypeptide: UvrABC system protein C (613 aa).

Residues 13 to 92 (DKSGVYIMKD…IKKYKPKYNI (80 aa)) form the GIY-YIG domain. Residues 204-239 (DEIINDLRIQMETAAEQLDFEKAAQLRNKITSIKQL) enclose the UVR domain.

It belongs to the UvrC family. Interacts with UvrB in an incision complex.

The protein localises to the cytoplasm. The UvrABC repair system catalyzes the recognition and processing of DNA lesions. UvrC both incises the 5' and 3' sides of the lesion. The N-terminal half is responsible for the 3' incision and the C-terminal half is responsible for the 5' incision. The sequence is that of UvrABC system protein C from Ruminiclostridium cellulolyticum (strain ATCC 35319 / DSM 5812 / JCM 6584 / H10) (Clostridium cellulolyticum).